Consider the following 152-residue polypeptide: MNKPVTLLLATLLAPLSGQLCAQESVTMDGKQYSTIEVNGQTYLIPDNGSKKRVARSLDSKVPQQTLRRGDVLMQGAASPELTVSGTLLVEADDASAKALATRHGLNFKQSSGGIALLEAKPGTDLNAIATKLKSEGVNVQIELSGAEQQPK.

The first 22 residues, 1 to 22 (MNKPVTLLLATLLAPLSGQLCA), serve as a signal peptide directing secretion.

In terms of assembly, forms a complex with the serine protease ASP in the periplasm. After translocation of the ASP-ORF2 complex from the periplasm to the extracellular space, the complex is dissociated in a pH-dependent manner.

Its subcellular location is the periplasm. It localises to the secreted. With respect to regulation, degraded by ASP after secretion and dissociation of the ASP-ORF2 complex. In terms of biological role, required for the production of the active form of the Aeromonas extracellular serine protease (ASP). Acts as a chaperone that helps ASP form an active structure in the periplasm. Formation of a complex with ASP in the periplasm also inactivates the protease activity and likely protects ASP from intrinsic proteases. Dissociation of the ASP-ORF2 complex after secretion in the extracellular space generates an active ASP. In Aeromonas sobria, this protein is ASP external chaperone.